A 273-amino-acid chain; its full sequence is DnaJ homolog subfamily C member 27 (273 aa).

Residues Met1–Lys18 form a required for interaction with MAPK1 region. Residues Gly23–Ser30, Asp71–Asp75, and Asn134–Asp137 each bind GTP. Positions Asp217 to Lys273 constitute a J domain.

Belongs to the small GTPase superfamily. Rab family. Interacts directly with MAPK1 (wild-type and kinase-deficient forms). Interacts directly (in GTP-bound form) with MAP2K1 (wild-type and kinase-deficient forms).

It is found in the nucleus. GTPase which can activate the MEK/ERK pathway and induce cell transformation when overexpressed. May act as a nuclear scaffold for MAPK1, probably by association with MAPK1 nuclear export signal leading to enhanced ERK1/ERK2 signaling. In Bos taurus (Bovine), this protein is DnaJ homolog subfamily C member 27 (DNAJC27).